The following is a 278-amino-acid chain: TATA box-binding protein-associated factor RNA polymerase I subunit D (278 aa).

2 disordered regions span residues 19–71 (LANR…SSFE) and 88–115 (KKRY…RRNP). Ser-23 carries the post-translational modification Phosphoserine. Composition is skewed to basic residues over residues 43-53 (REKRNPIRKFV) and 88-99 (KKRYKKKKKKRY). 2 positions are modified to phosphoserine: Ser-138 and Ser-234.

As to quaternary structure, component of the transcription factor SL1/TIF-IB complex, composed of TBP and at least TAF1A, TAF1B, TAF1C and TAF1D. Interacts with UBTF.

It is found in the nucleus. Component of the transcription factor SL1/TIF-IB complex, which is involved in the assembly of the PIC (preinitiation complex) during RNA polymerase I-dependent transcription. The rate of PIC formation probably is primarily dependent on the rate of association of SL1/TIF-IB with the rDNA promoter. SL1/TIF-IB is involved in stabilization of nucleolar transcription factor 1/UBTF on rDNA. Formation of SL1/TIF-IB excludes the association of TBP with TFIID subunits. This chain is TATA box-binding protein-associated factor RNA polymerase I subunit D (TAF1D), found in Pongo abelii (Sumatran orangutan).